The chain runs to 98 residues: Citrate lyase acyl carrier protein (98 aa).

An O-(phosphoribosyl dephospho-coenzyme A)serine modification is found at Ser14.

The protein belongs to the CitD family. As to quaternary structure, oligomer with a subunit composition of (alpha,beta,gamma)6.

It is found in the cytoplasm. Its function is as follows. Covalent carrier of the coenzyme of citrate lyase. The sequence is that of Citrate lyase acyl carrier protein from Shigella boydii serotype 4 (strain Sb227).